Consider the following 392-residue polypeptide: ATP phosphoribosyltransferase regulatory subunit (392 aa).

This sequence belongs to the class-II aminoacyl-tRNA synthetase family. HisZ subfamily. Heteromultimer composed of HisG and HisZ subunits.

Its subcellular location is the cytoplasm. The protein operates within amino-acid biosynthesis; L-histidine biosynthesis; L-histidine from 5-phospho-alpha-D-ribose 1-diphosphate: step 1/9. Functionally, required for the first step of histidine biosynthesis. May allow the feedback regulation of ATP phosphoribosyltransferase activity by histidine. The protein is ATP phosphoribosyltransferase regulatory subunit of Gloeobacter violaceus (strain ATCC 29082 / PCC 7421).